The primary structure comprises 534 residues: MVSEKCVAAFFLLQLCWAGCGFCSKVLVWPCDMSHWLNLKTILEELGARGHEVTVLKYPSIIIDQSKRIPLHFENIPLLYEIETAENRLNEIANLAVNVIPNLSLWEAAKTLQDFFLQVTGDFESICRSVLYNQKFMDKLRDAQYDVVVIDPVVPCGELVAEVLQIPFVYTLRFSMGYYMEKHCGQLPIPLSYVPVVMSELTDNMTFTERVKNMMFSLLFEYWLQQYDFAFWDQFYSETLGRPTTFCKTVGKADIWLIRTYWDVEFPRPYLPNFEFVGGLHCKPAKPLPKEMEEFVQSSGEHGVVVFSLGSMVKNLTEEKANLIASVLAQIPQKVLWRYSGKKPATLGSNTRLFNWIPQNDLLGHPKTKAFITHGGTNGIYEAIYHGVPMVGVPMLGDQPHNIAHMEAKGAALKVSISTMTSTDLLSAVRAVINEPSYKENAMRLSRIHHDQPVKPLDRAVFWIEFVMRHKGAKHLRVAAHDLSWFQYHSLDVIGFLLLCVVTLTFIITKFCLFVCQKLYMKESKKMGNRKKKN.

A signal peptide spans 1 to 18; that stretch reads MVSEKCVAAFFLLQLCWA. Topologically, residues 19-493 are extracellular; the sequence is GCGFCSKVLV…SWFQYHSLDV (475 aa). Asn102 carries an N-linked (GlcNAc...) asparagine glycan. Position 135 is an N6-succinyllysine (Lys135). An N-linked (GlcNAc...) asparagine glycan is attached at Asn204. A helical transmembrane segment spans residues 494-514; that stretch reads IGFLLLCVVTLTFIITKFCLF. Residues 515–534 are Cytoplasmic-facing; the sequence is VCQKLYMKESKKMGNRKKKN.

It belongs to the UDP-glycosyltransferase family. As to expression, highly expressed in liver, with lower levels in duodenum and jejunum.

The protein localises to the membrane. It catalyses the reaction glucuronate acceptor + UDP-alpha-D-glucuronate = acceptor beta-D-glucuronoside + UDP + H(+). UDP-glucuronosyltransferases catalyze phase II biotransformation reactions in which lipophilic substrates are conjugated with glucuronic acid to increase water solubility and enhance excretion. They are of major importance in the conjugation and subsequent elimination of potentially toxic xenobiotics and endogenous compounds. This Mus musculus (Mouse) protein is UDP-glucuronosyltransferase 2A3 (Ugt2a3).